The primary structure comprises 66 residues: MKASELRNYTDEELKNLLEEKKRQLMELRFQLAMGQLKNTSLIKLTKRDIARIKTILRERELGIRR.

Belongs to the universal ribosomal protein uL29 family.

The polypeptide is Large ribosomal subunit protein uL29 (Thermotoga sp. (strain RQ2)).